A 182-amino-acid polypeptide reads, in one-letter code: Putative manganese efflux pump MntP 1 (182 aa).

6 consecutive transmembrane segments (helical) span residues 4 to 24 (LLLLSLALSMDAFAVSLGLGA), 42 to 62 (IFQGIMPLLGFFVGVTFIAFI), 63 to 83 (SAFDHYLAFGILALIGAKMIY), 103 to 123 (LILSIATSIDALAAGVSLHLI), 127 to 147 (VFLSCTIIAFTTFLLSYLGVL), and 162 to 182 (ILGGVILIGIGSKILLEHLFF).

Belongs to the MntP (TC 9.B.29) family.

It is found in the cell inner membrane. Probably functions as a manganese efflux pump. The sequence is that of Putative manganese efflux pump MntP 1 from Wolinella succinogenes (strain ATCC 29543 / DSM 1740 / CCUG 13145 / JCM 31913 / LMG 7466 / NCTC 11488 / FDC 602W) (Vibrio succinogenes).